The primary structure comprises 279 residues: Large ribosomal subunit protein uL2 (279 aa).

Positions 223 to 279 (VAMNPIDHPHGGGEGRTSGGRHPVTPWGKGTKGTRTRSNKSTDKYILRSRHAKKKGR) are disordered. Positions 269–279 (LRSRHAKKKGR) are enriched in basic residues.

It belongs to the universal ribosomal protein uL2 family. In terms of assembly, part of the 50S ribosomal subunit. Forms a bridge to the 30S subunit in the 70S ribosome.

In terms of biological role, one of the primary rRNA binding proteins. Required for association of the 30S and 50S subunits to form the 70S ribosome, for tRNA binding and peptide bond formation. It has been suggested to have peptidyltransferase activity; this is somewhat controversial. Makes several contacts with the 16S rRNA in the 70S ribosome. The sequence is that of Large ribosomal subunit protein uL2 from Paracoccus denitrificans (strain Pd 1222).